Reading from the N-terminus, the 1508-residue chain is uncharacterized protein (1508 aa).

Positions 149-267 form a coiled coil; it reads ARRQQWRLRR…ARSLQEHRAT (119 aa). Disordered stretches follow at residues 248–268, 345–403, 536–575, 725–754, and 868–916; these read ERSEREREEAARSLQEHRATE, SQDW…LAGS, FLKKHPKDLKDTWNNGGGSLAGRTEEGKARGTLGRKGKNL, GLEEEDEMPHQEASGLGCRGAPEEPDSQEH, and EAKS…AEPW. The span at 868–881 shows a compositional bias: basic and acidic residues; sequence EAKSKESGEGDKPG. Positions 972-1034 form a coiled coil; it reads ISRLERDNHR…KGNLGQLQKA (63 aa). 2 disordered regions span residues 1158-1186 and 1204-1246; these read LAAGQTGPSTGTGNSRRGADSPPPSLVWR and KEAH…EEDP. A compositionally biased stretch (polar residues) spans 1163–1172; sequence TGPSTGTGNS. The segment covering 1204–1215 has biased composition (basic and acidic residues); the sequence is KEAHLEKEEKRP. Over residues 1220-1230 the composition is skewed to polar residues; that stretch reads AQGQALSSLSN. Positions 1271–1302 form a coiled coil; that stretch reads HQASLDEATRLQEELQAKLEELQKKQHEAKLA.

This is an uncharacterized protein from Homo sapiens (Human).